We begin with the raw amino-acid sequence, 268 residues long: Putative type I specificity subunit S.MpnORF365P (268 aa).

The protein belongs to the type-I restriction system S methylase family. The methyltransferase is composed of M and S polypeptides.

Its function is as follows. The specificity (S) subunit of a type I methyltransferase (MTase); this subunit dictates DNA sequence specificity. The single R subunit has multiple frameshifts and is probably not expressed. This Mycoplasma pneumoniae (strain ATCC 29342 / M129 / Subtype 1) (Mycoplasmoides pneumoniae) protein is Putative type I specificity subunit S.MpnORF365P.